Reading from the N-terminus, the 278-residue chain is Sulfur carrier protein FdhD (278 aa).

Cysteine 121 acts as the Cysteine persulfide intermediate in catalysis. 260–265 lines the Mo-bis(molybdopterin guanine dinucleotide) pocket; the sequence is FCKPGR.

This sequence belongs to the FdhD family.

The protein localises to the cytoplasm. Required for formate dehydrogenase (FDH) activity. Acts as a sulfur carrier protein that transfers sulfur from IscS to the molybdenum cofactor prior to its insertion into FDH. The sequence is that of Sulfur carrier protein FdhD from Salmonella heidelberg (strain SL476).